The following is a 131-amino-acid chain: uncharacterized protein (131 aa).

This is an uncharacterized protein from Methanocaldococcus jannaschii (strain ATCC 43067 / DSM 2661 / JAL-1 / JCM 10045 / NBRC 100440) (Methanococcus jannaschii).